A 411-amino-acid polypeptide reads, in one-letter code: MGEIQKITVKNPIVEMDGDEMTRIIWQFIKDKLILPYLNVDLKYYDLGIEYRDKTDDKVTTDAAEAILQYGVGVKCATITPDEARVKEFNLKKMWLSPNGTLRNVIGGTVFREPIVIDNIPRIVPSWEKPIIIGRHAFGDQYKATDVVIPAAGDLKLVFKPKDGGEVQEFPVYQFDGPGVALSMYNTDASITDFAESSFQLAIERKLNLFSSTKNTILKKYDGKFKDIFEGLYASKYKTKMDELGIWYEHRLIDDMVAQMLKSKGGYIIAMKNYDGDVQSDIVAQGFGSLGLMTSVLVTPDGKAFESEAAHGTVTRHYRQHQQGKETSTNSIASIYAWTRGLIQRGKLDDTPEVVKFAEELEKAVIETVSKDNIMTKDLALTQGKTDRSSYVTTEEFIDGVANRLNKNLGY.

NADP(+)-binding positions include 78–80 (TIT) and R85. T80 is a substrate binding site. Residues 97 to 103 (SPNGTLR), R112, and R135 contribute to the substrate site. D254 lines the Mn(2+) pocket. K262 is an NADP(+) binding site. Residue D277 participates in Mn(2+) binding. Residues 312 to 317 (GTVTRH) and N330 contribute to the NADP(+) site.

It belongs to the isocitrate and isopropylmalate dehydrogenases family. Mg(2+) serves as cofactor. The cofactor is Mn(2+).

It localises to the peroxisome. The catalysed reaction is D-threo-isocitrate + NADP(+) = 2-oxoglutarate + CO2 + NADPH. Its function is as follows. May play a role in N-alkane metabolism, glutamate synthesis, and/or NADPH generation in the peroxisomes. The protein is Isocitrate dehydrogenase [NADP] peroxisomal (IDP2) of Candida tropicalis (Yeast).